We begin with the raw amino-acid sequence, 344 residues long: MIKILGIESSCDDTAVSIITENREILSNIIISQNTEHTVFGGVVPEIAARSHLSHLDKALKNVLKESNTKLTDISTIAATSGPGLIGSVIVGSMFARSLSSALKKPFIAINHLEGHALTARLTDNIPYPYLLLLASGGHCQFVAVLGLGKYKILGSTIDDAVGEAFDKVAKMLNLAFPGGPEIEKRATLGDPNKYKFPKPIINSGNCNMSFSGLKTAVRTLIMNLKEINDTVINDIAASFQFTIGEILSSKVQDAIRAYEQITNNFDKKNIVIAGGVAANKYLQEILSSCAKTYGYRLIYPPIHLCTDNAAMIAYAGLERYNNKLFTPLNFCPKARWSLEDISN.

Residues H112 and H116 each coordinate Fe cation. Substrate is bound by residues 134-138 (LASGG), D167, G180, and N280. D308 contacts Fe cation.

It belongs to the KAE1 / TsaD family. Requires Fe(2+) as cofactor.

The protein localises to the cytoplasm. The catalysed reaction is L-threonylcarbamoyladenylate + adenosine(37) in tRNA = N(6)-L-threonylcarbamoyladenosine(37) in tRNA + AMP + H(+). Its function is as follows. Required for the formation of a threonylcarbamoyl group on adenosine at position 37 (t(6)A37) in tRNAs that read codons beginning with adenine. Is involved in the transfer of the threonylcarbamoyl moiety of threonylcarbamoyl-AMP (TC-AMP) to the N6 group of A37, together with TsaE and TsaB. TsaD likely plays a direct catalytic role in this reaction. The protein is tRNA N6-adenosine threonylcarbamoyltransferase of Rickettsia massiliae (strain Mtu5).